The primary structure comprises 141 residues: Nucleoside diphosphate kinase (141 aa).

The ATP site is built by K11, F59, R87, T93, R104, and N114. H117 acts as the Pros-phosphohistidine intermediate in catalysis.

The protein belongs to the NDK family. As to quaternary structure, homotetramer. Mg(2+) serves as cofactor.

The protein localises to the cytoplasm. The enzyme catalyses a 2'-deoxyribonucleoside 5'-diphosphate + ATP = a 2'-deoxyribonucleoside 5'-triphosphate + ADP. The catalysed reaction is a ribonucleoside 5'-diphosphate + ATP = a ribonucleoside 5'-triphosphate + ADP. Functionally, major role in the synthesis of nucleoside triphosphates other than ATP. The ATP gamma phosphate is transferred to the NDP beta phosphate via a ping-pong mechanism, using a phosphorylated active-site intermediate. In Polynucleobacter necessarius subsp. necessarius (strain STIR1), this protein is Nucleoside diphosphate kinase.